The sequence spans 309 residues: Acetyl-coenzyme A carboxylase carboxyl transferase subunit beta (309 aa).

The CoA carboxyltransferase N-terminal domain maps to L27–E296. 4 residues coordinate Zn(2+): C31, C34, C50, and C53. The C4-type zinc-finger motif lies at C31 to C53. The interval G288–Q309 is disordered.

It belongs to the AccD/PCCB family. Acetyl-CoA carboxylase is a heterohexamer composed of biotin carboxyl carrier protein (AccB), biotin carboxylase (AccC) and two subunits each of ACCase subunit alpha (AccA) and ACCase subunit beta (AccD). Zn(2+) is required as a cofactor.

The protein resides in the cytoplasm. It catalyses the reaction N(6)-carboxybiotinyl-L-lysyl-[protein] + acetyl-CoA = N(6)-biotinyl-L-lysyl-[protein] + malonyl-CoA. It participates in lipid metabolism; malonyl-CoA biosynthesis; malonyl-CoA from acetyl-CoA: step 1/1. Its function is as follows. Component of the acetyl coenzyme A carboxylase (ACC) complex. Biotin carboxylase (BC) catalyzes the carboxylation of biotin on its carrier protein (BCCP) and then the CO(2) group is transferred by the transcarboxylase to acetyl-CoA to form malonyl-CoA. The chain is Acetyl-coenzyme A carboxylase carboxyl transferase subunit beta from Marinobacter nauticus (strain ATCC 700491 / DSM 11845 / VT8) (Marinobacter aquaeolei).